Consider the following 543-residue polypeptide: MEFAEMIRTGQAQAELLRGPEEPPLRGTLCITGHHLLLSPGPQATPDLWLLLLRNVDSIEKRVAGDSGTITLRCKDLRVLQLDIEGVEATLDIARSIEALSSLESVITSFPFFYRPKGLRLGDAWHFHPPECYYKRVARETNAWRLSEANEDFSLCPSYPRAVIVPRAVDDSAVARSARFRQGGRFPVLSYYHAPSGTVLLRAGQPLTGPQKRRCSEDEELLRAVLAGARPGARGFIVDTRSPQAAKQARMTGGGTEAKAAYPGWKRLHRPLERGRPLQESFVRLVEACGDLEQSMDRWLNRLESCRWLSHVKETLSTACLAAQSMEQEGACILVHGAEGTDSTLLITSLAQLILDPLSRTMAGFQELIEREWVQAGHPFQLRCAHSAFSHARPKHEAPTFLLFLDCVWQLGRQFPLSLEFGEGMLLALFDHAYASPFGTFLCNNEKERCLCEVRTRTHSLWSGLSQPKEQRKLRNPLYVPNPLAIWPSAEPQSLRLWQGLFLRGTRPPEPSEVAWEKVWQIVTDQEKTEGSQPTDSASEPGP.

The 379-residue stretch at 124-502 (AWHFHPPECY…QSLRLWQGLF (379 aa)) folds into the Myotubularin phosphatase domain.

The protein belongs to the protein-tyrosine phosphatase family. Non-receptor class myotubularin subfamily.

Probable pseudophosphatase. This is Myotubularin-related protein 9-like from Bos taurus (Bovine).